We begin with the raw amino-acid sequence, 201 residues long: Kinetochore protein SPC24 homolog (201 aa).

Residues 78-133 adopt a coiled-coil conformation; sequence DIAAEDEIERLQKELDEEMEREFKLKDELRLVADELKDLNAQLSSIDEHKQSTKRK.

The protein belongs to the SPC24 family. In terms of assembly, component of the NDC80 complex, which consists of NDC80, NUF2, SPC24 and SPC25. Highly expressed in actively dividing tissues, such as shoot apical meristem (SAM), root apical meristem (RAM), vasculature, newly emerging leaves and inflorescence shoots.

It is found in the chromosome. The protein resides in the centromere. Functionally, acts as a component of the essential kinetochore-associated NDC80 complex, which is required for chromosome segregation and spindle checkpoint activity to ensure proper cell division. Required for the maintenance of plant architecture. The polypeptide is Kinetochore protein SPC24 homolog (Arabidopsis thaliana (Mouse-ear cress)).